The following is a 104-amino-acid chain: Large ribosomal subunit protein bL21 (104 aa).

This sequence belongs to the bacterial ribosomal protein bL21 family. Part of the 50S ribosomal subunit. Contacts protein L20.

This protein binds to 23S rRNA in the presence of protein L20. The polypeptide is Large ribosomal subunit protein bL21 (Lactococcus lactis subsp. lactis (strain IL1403) (Streptococcus lactis)).